Consider the following 336-residue polypeptide: Holliday junction branch migration complex subunit RuvB (336 aa).

Residues 4-184 (ADRIISAIAK…FGIVQRLEFY (181 aa)) are large ATPase domain (RuvB-L). Residues Ile-23, Arg-24, Gly-65, Lys-68, Thr-69, Thr-70, 131-133 (EDY), Arg-174, Tyr-184, and Arg-221 contribute to the ATP site. Thr-69 lines the Mg(2+) pocket. Positions 185–255 (SIEDLTSIVM…IAKAALAMLD (71 aa)) are small ATPAse domain (RuvB-S). Residues 258 to 336 (QAGFDYLDRK…HFGLAKLADK (79 aa)) are head domain (RuvB-H). DNA contacts are provided by Arg-294, Arg-313, and Arg-318.

This sequence belongs to the RuvB family. As to quaternary structure, homohexamer. Forms an RuvA(8)-RuvB(12)-Holliday junction (HJ) complex. HJ DNA is sandwiched between 2 RuvA tetramers; dsDNA enters through RuvA and exits via RuvB. An RuvB hexamer assembles on each DNA strand where it exits the tetramer. Each RuvB hexamer is contacted by two RuvA subunits (via domain III) on 2 adjacent RuvB subunits; this complex drives branch migration. In the full resolvosome a probable DNA-RuvA(4)-RuvB(12)-RuvC(2) complex forms which resolves the HJ.

It is found in the cytoplasm. It carries out the reaction ATP + H2O = ADP + phosphate + H(+). Its function is as follows. The RuvA-RuvB-RuvC complex processes Holliday junction (HJ) DNA during genetic recombination and DNA repair, while the RuvA-RuvB complex plays an important role in the rescue of blocked DNA replication forks via replication fork reversal (RFR). RuvA specifically binds to HJ cruciform DNA, conferring on it an open structure. The RuvB hexamer acts as an ATP-dependent pump, pulling dsDNA into and through the RuvAB complex. RuvB forms 2 homohexamers on either side of HJ DNA bound by 1 or 2 RuvA tetramers; 4 subunits per hexamer contact DNA at a time. Coordinated motions by a converter formed by DNA-disengaged RuvB subunits stimulates ATP hydrolysis and nucleotide exchange. Immobilization of the converter enables RuvB to convert the ATP-contained energy into a lever motion, pulling 2 nucleotides of DNA out of the RuvA tetramer per ATP hydrolyzed, thus driving DNA branch migration. The RuvB motors rotate together with the DNA substrate, which together with the progressing nucleotide cycle form the mechanistic basis for DNA recombination by continuous HJ branch migration. Branch migration allows RuvC to scan DNA until it finds its consensus sequence, where it cleaves and resolves cruciform DNA. The polypeptide is Holliday junction branch migration complex subunit RuvB (Actinobacillus succinogenes (strain ATCC 55618 / DSM 22257 / CCUG 43843 / 130Z)).